The primary structure comprises 390 residues: Succinate--CoA ligase [ADP-forming] subunit beta (390 aa).

Residues 9 to 244 form the ATP-grasp domain; it reads KEIFREYGVP…LSEEDPVEVE (236 aa). ATP is bound by residues Lys-46, 53-55, Glu-99, Ala-102, and Glu-107; that span reads GRG. Mg(2+) is bound by residues Asn-199 and Asp-213. Substrate is bound by residues Asn-264 and 321 to 323; that span reads GIV.

It belongs to the succinate/malate CoA ligase beta subunit family. Heterotetramer of two alpha and two beta subunits. Mg(2+) is required as a cofactor.

The catalysed reaction is succinate + ATP + CoA = succinyl-CoA + ADP + phosphate. It carries out the reaction GTP + succinate + CoA = succinyl-CoA + GDP + phosphate. It functions in the pathway carbohydrate metabolism; tricarboxylic acid cycle; succinate from succinyl-CoA (ligase route): step 1/1. In terms of biological role, succinyl-CoA synthetase functions in the citric acid cycle (TCA), coupling the hydrolysis of succinyl-CoA to the synthesis of either ATP or GTP and thus represents the only step of substrate-level phosphorylation in the TCA. The beta subunit provides nucleotide specificity of the enzyme and binds the substrate succinate, while the binding sites for coenzyme A and phosphate are found in the alpha subunit. This is Succinate--CoA ligase [ADP-forming] subunit beta from Nitratiruptor sp. (strain SB155-2).